Consider the following 238-residue polypeptide: Ribonuclease PH (238 aa).

Phosphate is bound by residues R86 and 124–126 (GTR).

Belongs to the RNase PH family. As to quaternary structure, homohexameric ring arranged as a trimer of dimers.

The enzyme catalyses tRNA(n+1) + phosphate = tRNA(n) + a ribonucleoside 5'-diphosphate. Functionally, phosphorolytic 3'-5' exoribonuclease that plays an important role in tRNA 3'-end maturation. Removes nucleotide residues following the 3'-CCA terminus of tRNAs; can also add nucleotides to the ends of RNA molecules by using nucleoside diphosphates as substrates, but this may not be physiologically important. Probably plays a role in initiation of 16S rRNA degradation (leading to ribosome degradation) during starvation. This chain is Ribonuclease PH, found in Psychrobacter arcticus (strain DSM 17307 / VKM B-2377 / 273-4).